The following is a 234-amino-acid chain: Synaptogyrin-4 (234 aa).

An MARVEL domain is found at 18–169 (FLRRPKTITR…QAYLAFQDLR (152 aa)). Transmembrane regions (helical) follow at residues 25 to 45 (ITRV…LTDG), 66 to 86 (CSFA…FLVL), 104 to 124 (LLDF…FCFL), and 145 to 165 (AAIA…YLAF).

It belongs to the synaptogyrin family.

The protein localises to the membrane. The polypeptide is Synaptogyrin-4 (SYNGR4) (Homo sapiens (Human)).